A 678-amino-acid chain; its full sequence is UvrABC system protein C (678 aa).

Residues 16 to 95 enclose the GIY-YIG domain; that stretch reads VEPGVYRFRD…IKEFDPRFNI (80 aa). A UVR domain is found at 208 to 243; sequence DRLIREMEQQMNAAAEELDFERAARLRDNIGAMRRA. Residues 477–508 are disordered; that stretch reads HLRDAEAAPEGRPEQGPRASARPEQGPRASAR. Basic and acidic residues predominate over residues 479 to 491; the sequence is RDAEAAPEGRPEQ.

This sequence belongs to the UvrC family. As to quaternary structure, interacts with UvrB in an incision complex.

The protein localises to the cytoplasm. Its function is as follows. The UvrABC repair system catalyzes the recognition and processing of DNA lesions. UvrC both incises the 5' and 3' sides of the lesion. The N-terminal half is responsible for the 3' incision and the C-terminal half is responsible for the 5' incision. The sequence is that of UvrABC system protein C from Mycolicibacterium vanbaalenii (strain DSM 7251 / JCM 13017 / BCRC 16820 / KCTC 9966 / NRRL B-24157 / PYR-1) (Mycobacterium vanbaalenii).